A 648-amino-acid polypeptide reads, in one-letter code: Threonine--tRNA ligase (648 aa).

In terms of domain architecture, TGS spans 1 to 63; the sequence is MSQISLTFPD…AASGRIAINT (63 aa). The catalytic stretch occupies residues 247-544; that stretch reads DHRKLGREME…LIENYSGKLP (298 aa). Residues C344, H395, and H521 each contribute to the Zn(2+) site.

Belongs to the class-II aminoacyl-tRNA synthetase family. As to quaternary structure, homodimer. The cofactor is Zn(2+).

The protein localises to the cytoplasm. The enzyme catalyses tRNA(Thr) + L-threonine + ATP = L-threonyl-tRNA(Thr) + AMP + diphosphate + H(+). Its function is as follows. Catalyzes the attachment of threonine to tRNA(Thr) in a two-step reaction: L-threonine is first activated by ATP to form Thr-AMP and then transferred to the acceptor end of tRNA(Thr). Also edits incorrectly charged L-seryl-tRNA(Thr). In Paracoccus denitrificans (strain Pd 1222), this protein is Threonine--tRNA ligase.